Consider the following 338-residue polypeptide: Galaxin (338 aa).

The first 23 residues, 1–23 (MKPSGAFLSLCVVLLSLATHCFS), serve as a signal peptide directing secretion. The segment covering 30–47 (RRDAHSDTNALKSRDRRQ) has biased composition (basic and acidic residues). The interval 30–50 (RRDAHSDTNALKSRDRRQAPA) is disordered.

As to expression, component of the acid-insoluble organic matrix of the aragonitic skeleton (at protein level). Initially, expressed in an aboral submarginal ring and then along calcifying septa.

The protein resides in the secreted. The polypeptide is Galaxin (Acropora millepora (Staghorn coral)).